The primary structure comprises 315 residues: COMPASS component SWD3 (315 aa).

6 WD repeats span residues 53 to 93, 94 to 133, 136 to 178, 187 to 228, 238 to 278, and 285 to 315; these read SHAR…HTFI, GHTAPVISLTFNRKGNLLFTSSMDESIKIWDTLNGSLMKT, AHSE…KTLT, NGVV…RTFQ, HHSC…LLQL, and HHSSPVMSIHCFGNIMCSLALNGDCCLWRWV.

Component of the Set1C/COMPASS complex which consists of SET1(2), BRE2(2), SPP1(2), SDC1(1), SHG1(1), SWD1(1), SWD2(1), and SWD3(1).

It is found in the nucleus. It localises to the chromosome. Its subcellular location is the telomere. The COMPASS (Set1C) complex specifically mono-, di- and trimethylates histone H3 to form H3K4me1/2/3, which subsequently plays a role in telomere length maintenance and transcription elongation regulation. COMPASS recognizes ubiquitinated H2B on one face of the nucleosome which stimulates the methylation of H3 on the opposing face. SWD3/CPS30 establishes COMPASS trimethylation activity and may also serve as the anchor point to properly tether and space the other subunits. The sequence is that of COMPASS component SWD3 from Saccharomyces cerevisiae (strain ATCC 204508 / S288c) (Baker's yeast).